The following is a 125-amino-acid chain: Profilin-A (125 aa).

S2 bears the N-acetylserine mark.

It belongs to the profilin family. As to quaternary structure, occurs in many kinds of cells as a complex with monomeric actin in a 1:1 ratio.

It localises to the cytoplasm. It is found in the cytoskeleton. In terms of biological role, binds to actin and affects the structure of the cytoskeleton. At high concentrations, profilin prevents the polymerization of actin, whereas it enhances it at low concentrations. By binding to PIP2, it inhibits the formation of IP3 and DG. The protein is Profilin-A (PROA) of Physarum polycephalum (Slime mold).